The sequence spans 195 residues: UPF0215 protein TSIB_1161 (195 aa).

Belongs to the UPF0215 family.

The protein is UPF0215 protein TSIB_1161 of Thermococcus sibiricus (strain DSM 12597 / MM 739).